A 163-amino-acid chain; its full sequence is Phosphopantetheine adenylyltransferase (163 aa).

S9 serves as a coordination point for substrate. ATP is bound by residues 9 to 10 (SF) and H17. Residues K41, T73, and R87 each contribute to the substrate site. ATP-binding positions include 88–90 (GLR), E98, and 123–129 (YSFISSG).

The protein belongs to the bacterial CoaD family. In terms of assembly, homohexamer. The cofactor is Mg(2+).

The protein localises to the cytoplasm. The enzyme catalyses (R)-4'-phosphopantetheine + ATP + H(+) = 3'-dephospho-CoA + diphosphate. It functions in the pathway cofactor biosynthesis; coenzyme A biosynthesis; CoA from (R)-pantothenate: step 4/5. Reversibly transfers an adenylyl group from ATP to 4'-phosphopantetheine, yielding dephospho-CoA (dPCoA) and pyrophosphate. The polypeptide is Phosphopantetheine adenylyltransferase (Desulforudis audaxviator (strain MP104C)).